The primary structure comprises 352 residues: CD5 antigen-like (352 aa).

Positions 1–21 are cleaved as a signal peptide; it reads MAPLFNLMLAILSIFVGSCFS. 3 SRCR domains span residues 27–128, 141–241, and 246–348; these read VQLV…AQCE, VRLV…MECE, and LKLV…VICT. Disulfide bonds link cysteine 36/cysteine 70, cysteine 52/cysteine 117, cysteine 65/cysteine 127, cysteine 98/cysteine 108, cysteine 166/cysteine 230, cysteine 179/cysteine 240, cysteine 211/cysteine 221, cysteine 255/cysteine 289, cysteine 271/cysteine 337, cysteine 284/cysteine 347, and cysteine 317/cysteine 327. Residue asparagine 99 is glycosylated (N-linked (GlcNAc...) asparagine). The N-linked (GlcNAc...) asparagine glycan is linked to asparagine 229.

In terms of assembly, interacts with FASN; the interaction is direct. Interacts (via SRCR2 and SRCR3) with pentameric IgM (via Fc region); disulfide-linked. N-glycosylated. N-glycan at Asn-99 possesses only alpha2,6-sialylated terminals, while Asn-229 possesses both alpha2,6-sialylated and non-sialylated terminals. N-glycosylation increases secretion. Specifically expressed in tissue macrophages. Expressed in thymus, liver, spleen and lymph nodes. Present in Th17 cells; mainly present in non-pathogenic Th17 cells.

Its subcellular location is the secreted. It localises to the cytoplasm. Its function is as follows. Secreted protein that acts as a key regulator of lipid synthesis: mainly expressed by macrophages in lymphoid and inflamed tissues and regulates mechanisms in inflammatory responses, such as infection or atherosclerosis. Able to inhibit lipid droplet size in adipocytes. Following incorporation into mature adipocytes via CD36-mediated endocytosis, associates with cytosolic FASN, inhibiting fatty acid synthase activity and leading to lipolysis, the degradation of triacylglycerols into glycerol and free fatty acids (FFA). CD5L-induced lipolysis occurs with progression of obesity: participates in obesity-associated inflammation following recruitment of inflammatory macrophages into adipose tissues, a cause of insulin resistance and obesity-related metabolic disease. Regulation of intracellular lipids mediated by CD5L has a direct effect on transcription regulation mediated by nuclear receptors ROR-gamma (RORC). Acts as a key regulator of metabolic switch in T-helper Th17 cells. Regulates the expression of pro-inflammatory genes in Th17 cells by altering the lipid content and limiting synthesis of cholesterol ligand of RORC, the master transcription factor of Th17-cell differentiation. CD5L is mainly present in non-pathogenic Th17 cells, where it decreases the content of polyunsaturated fatty acyls (PUFA), affecting two metabolic proteins MSMO1 and CYP51A1, which synthesize ligands of RORC, limiting RORC activity and expression of pro-inflammatory genes. Participates in obesity-associated autoimmunity via its association with IgM, interfering with the binding of IgM to Fcalpha/mu receptor and enhancing the development of long-lived plasma cells that produce high-affinity IgG autoantibodies. Also acts as an inhibitor of apoptosis in macrophages: promotes macrophage survival from the apoptotic effects of oxidized lipids in case of atherosclerosis. Involved in early response to microbial infection against various pathogens by acting as a pattern recognition receptor and by promoting autophagy. This chain is CD5 antigen-like (Cd5l), found in Mus musculus (Mouse).